The primary structure comprises 292 residues: Ribosomal protein L11 methyltransferase (292 aa).

4 residues coordinate S-adenosyl-L-methionine: Thr136, Gly159, Asp181, and Asn228.

The protein belongs to the methyltransferase superfamily. PrmA family.

It localises to the cytoplasm. The catalysed reaction is L-lysyl-[protein] + 3 S-adenosyl-L-methionine = N(6),N(6),N(6)-trimethyl-L-lysyl-[protein] + 3 S-adenosyl-L-homocysteine + 3 H(+). Functionally, methylates ribosomal protein L11. The sequence is that of Ribosomal protein L11 methyltransferase from Rhizobium etli (strain ATCC 51251 / DSM 11541 / JCM 21823 / NBRC 15573 / CFN 42).